Reading from the N-terminus, the 269-residue chain is Enoyl-[acyl-carrier-protein] reductase [NADH] (269 aa).

Residues 20–21, 64–65, and 95–96 contribute to the NAD(+) site; these read SI, DV, and IG. Substrate is bound at residue Tyr-158. Residues Lys-165 and Ile-194 each coordinate NAD(+).

This sequence belongs to the short-chain dehydrogenases/reductases (SDR) family. FabI subfamily. In terms of assembly, homodimer. Homotetramer.

The enzyme catalyses a 2,3-saturated acyl-[ACP] + NAD(+) = a (2E)-enoyl-[ACP] + NADH + H(+). The catalysed reaction is a 2,3-saturated acyl-CoA + NAD(+) = a (2E)-enoyl-CoA + NADH + H(+). It participates in lipid metabolism; mycolic acid biosynthesis. In terms of biological role, enoyl-ACP reductase of the type II fatty acid syntase (FAS-II) system, which is involved in the biosynthesis of mycolic acids, a major component of mycobacterial cell walls. Catalyzes the NADH-dependent reduction of the double bond of 2-trans-enoyl-[acyl-carrier protein], an essential step in the fatty acid elongation cycle of the FAS-II pathway. Shows preference for long-chain fatty acyl thioester substrates, and can also use 2-trans-enoyl-CoAs as alternative substrates. The mycobacterial FAS-II system utilizes the products of the FAS-I system as primers to extend fatty acyl chain lengths up to C56, forming the meromycolate chain that serves as the precursor for final mycolic acids. Functionally, is the primary target of the first-line antitubercular drug isoniazid (INH) and of the second-line drug ethionamide (ETH). Overexpressed inhA confers INH and ETH resistance to M.bovis. The mechanism of isoniazid action against InhA is covalent attachment of the activated form of the drug to the nicotinamide ring of NAD and binding of the INH-NAD adduct to the active site of InhA. Similarly, the ETH-NAD adduct binds InhA. The polypeptide is Enoyl-[acyl-carrier-protein] reductase [NADH] (Mycobacterium bovis (strain ATCC BAA-935 / AF2122/97)).